The following is a 126-amino-acid chain: Type II methyltransferase M.HgiGI (126 aa).

One can recognise an SAM-dependent MTase C5-type domain in the interval 1–126 (MKTIDLFAGC…ARLSKIHQQA (126 aa)). C75 is a catalytic residue.

It belongs to the class I-like SAM-binding methyltransferase superfamily. C5-methyltransferase family.

The enzyme catalyses a 2'-deoxycytidine in DNA + S-adenosyl-L-methionine = a 5-methyl-2'-deoxycytidine in DNA + S-adenosyl-L-homocysteine + H(+). A methylase, recognizes the double-stranded sequence 5'-GRCGYC-3', methylates C-? on both strands, and protects the DNA from cleavage by the HgiEI endonuclease. This Herpetosiphon aurantiacus (Herpetosiphon giganteus) protein is Type II methyltransferase M.HgiGI.